Here is a 366-residue protein sequence, read N- to C-terminus: 3-dehydroquinate synthase (366 aa).

NAD(+) is bound by residues 74 to 79 (SGEAAK), 108 to 112 (GVVGD), 132 to 133 (TT), K144, K153, and 171 to 174 (FLRT). Zn(2+) contacts are provided by E186, H249, and H266.

The protein belongs to the sugar phosphate cyclases superfamily. Dehydroquinate synthase family. Co(2+) serves as cofactor. It depends on Zn(2+) as a cofactor. The cofactor is NAD(+).

The protein resides in the cytoplasm. The catalysed reaction is 7-phospho-2-dehydro-3-deoxy-D-arabino-heptonate = 3-dehydroquinate + phosphate. It functions in the pathway metabolic intermediate biosynthesis; chorismate biosynthesis; chorismate from D-erythrose 4-phosphate and phosphoenolpyruvate: step 2/7. Functionally, catalyzes the conversion of 3-deoxy-D-arabino-heptulosonate 7-phosphate (DAHP) to dehydroquinate (DHQ). This chain is 3-dehydroquinate synthase, found in Geobacillus kaustophilus (strain HTA426).